The following is a 381-amino-acid chain: Protein COS8 (381 aa).

Over 1 to 42 (MKENEVKDEKSVDVLSFKQLEFQKTVLPQDVFRNELTWFCYE) the chain is Extracellular. Residues 43 to 63 (IYKSLAFRIWMLLWLPLSVWW) form a helical membrane-spanning segment. Over 64–72 (KLSSNWIHP) the chain is Cytoplasmic. Residues 73 to 93 (LIVSLLVLFLGPFFVLVICGL) traverse the membrane as a helical segment. Topologically, residues 94-237 (SRKRSLSKQL…WILKRIFNLR (144 aa)) are extracellular. Residues 238 to 258 (CLPLFLYYFLIVYTSGNADLI) traverse the membrane as a helical segment. The Cytoplasmic segment spans residues 259-381 (SRFLFPVVMF…QSARNEKPLK (123 aa)).

Belongs to the DUP/COS family.

It is found in the membrane. This Saccharomyces cerevisiae (strain ATCC 204508 / S288c) (Baker's yeast) protein is Protein COS8 (COS8).